The sequence spans 389 residues: 23S rRNA (uracil(747)-C(5))-methyltransferase RlmC (389 aa).

The [4Fe-4S] cluster site is built by cysteine 6, cysteine 14, cysteine 17, and cysteine 92. Positions 217, 246, 273, and 319 each coordinate S-adenosyl-L-methionine. Cysteine 346 functions as the Nucleophile in the catalytic mechanism.

This sequence belongs to the class I-like SAM-binding methyltransferase superfamily. RNA M5U methyltransferase family. RlmC subfamily.

It carries out the reaction uridine(747) in 23S rRNA + S-adenosyl-L-methionine = 5-methyluridine(747) in 23S rRNA + S-adenosyl-L-homocysteine + H(+). Its function is as follows. Catalyzes the formation of 5-methyl-uridine at position 747 (m5U747) in 23S rRNA. The sequence is that of 23S rRNA (uracil(747)-C(5))-methyltransferase RlmC from Glaesserella parasuis serovar 5 (strain SH0165) (Haemophilus parasuis).